An 860-amino-acid chain; its full sequence is Alanine--tRNA ligase (860 aa).

The Zn(2+) site is built by His-553, His-557, Cys-655, and His-659.

This sequence belongs to the class-II aminoacyl-tRNA synthetase family. The cofactor is Zn(2+).

It localises to the cytoplasm. The enzyme catalyses tRNA(Ala) + L-alanine + ATP = L-alanyl-tRNA(Ala) + AMP + diphosphate. Its function is as follows. Catalyzes the attachment of alanine to tRNA(Ala) in a two-step reaction: alanine is first activated by ATP to form Ala-AMP and then transferred to the acceptor end of tRNA(Ala). Also edits incorrectly charged Ser-tRNA(Ala) and Gly-tRNA(Ala) via its editing domain. This chain is Alanine--tRNA ligase, found in Legionella pneumophila (strain Lens).